The primary structure comprises 177 residues: ATP-dependent protease subunit HslV (177 aa).

Threonine 6 is an active-site residue. Residues serine 162, cysteine 165, and threonine 168 each contribute to the Na(+) site.

It belongs to the peptidase T1B family. HslV subfamily. A double ring-shaped homohexamer of HslV is capped on each side by a ring-shaped HslU homohexamer. The assembly of the HslU/HslV complex is dependent on binding of ATP.

The protein resides in the cytoplasm. The catalysed reaction is ATP-dependent cleavage of peptide bonds with broad specificity.. Allosterically activated by HslU binding. Protease subunit of a proteasome-like degradation complex believed to be a general protein degrading machinery. The sequence is that of ATP-dependent protease subunit HslV from Desulforudis audaxviator (strain MP104C).